Consider the following 294-residue polypeptide: Cytidine deaminase (294 aa).

CMP/dCMP-type deaminase domains lie at 49–169 (TPQQ…FGPA) and 188–294 (ETQD…YIAL). 90–92 (NLE) contributes to the substrate binding site. A Zn(2+)-binding site is contributed by His103. Residue Glu105 is the Proton donor of the active site. Zn(2+)-binding residues include Cys130 and Cys133.

The protein belongs to the cytidine and deoxycytidylate deaminase family. Homodimer. Requires Zn(2+) as cofactor.

The catalysed reaction is cytidine + H2O + H(+) = uridine + NH4(+). The enzyme catalyses 2'-deoxycytidine + H2O + H(+) = 2'-deoxyuridine + NH4(+). In terms of biological role, this enzyme scavenges exogenous and endogenous cytidine and 2'-deoxycytidine for UMP synthesis. The sequence is that of Cytidine deaminase from Pasteurella multocida (strain Pm70).